The primary structure comprises 169 residues: Ribosome maturation factor RimM (169 aa).

The PRC barrel domain occupies 95-168; the sequence is PPDTAYIHDL…EMTIRRFDEF (74 aa).

It belongs to the RimM family. In terms of assembly, binds ribosomal protein uS19.

The protein resides in the cytoplasm. An accessory protein needed during the final step in the assembly of 30S ribosomal subunit, possibly for assembly of the head region. Essential for efficient processing of 16S rRNA. May be needed both before and after RbfA during the maturation of 16S rRNA. It has affinity for free ribosomal 30S subunits but not for 70S ribosomes. This is Ribosome maturation factor RimM from Prosthecochloris aestuarii (strain DSM 271 / SK 413).